The chain runs to 161 residues: Phosphopantetheine adenylyltransferase (161 aa).

Ser8 provides a ligand contact to substrate. Residues 8–9 (SF) and His16 each bind ATP. Residues 36-40 (ENPRK), Leu72, and Arg86 contribute to the substrate site. ATP is bound by residues 87–89 (GLR), Glu97, and 122–128 (FSFISSS). Position 132 (Glu132) interacts with substrate.

It belongs to the bacterial CoaD family. Homohexamer. It depends on Mg(2+) as a cofactor.

Its subcellular location is the cytoplasm. It catalyses the reaction (R)-4'-phosphopantetheine + ATP + H(+) = 3'-dephospho-CoA + diphosphate. It functions in the pathway cofactor biosynthesis; coenzyme A biosynthesis; CoA from (R)-pantothenate: step 4/5. Its function is as follows. Reversibly transfers an adenylyl group from ATP to 4'-phosphopantetheine, yielding dephospho-CoA (dPCoA) and pyrophosphate. This Thermotoga maritima (strain ATCC 43589 / DSM 3109 / JCM 10099 / NBRC 100826 / MSB8) protein is Phosphopantetheine adenylyltransferase.